Consider the following 275-residue polypeptide: 3-methyl-2-oxobutanoate hydroxymethyltransferase (275 aa).

Residues Asp-44 and Asp-83 each coordinate Mg(2+). 3-methyl-2-oxobutanoate-binding positions include 44–45 (DS), Asp-83, and Lys-113. Glu-115 serves as a coordination point for Mg(2+). Glu-182 functions as the Proton acceptor in the catalytic mechanism.

It belongs to the PanB family. In terms of assembly, homodecamer; pentamer of dimers. The cofactor is Mg(2+).

The protein resides in the cytoplasm. It catalyses the reaction 3-methyl-2-oxobutanoate + (6R)-5,10-methylene-5,6,7,8-tetrahydrofolate + H2O = 2-dehydropantoate + (6S)-5,6,7,8-tetrahydrofolate. It participates in cofactor biosynthesis; (R)-pantothenate biosynthesis; (R)-pantoate from 3-methyl-2-oxobutanoate: step 1/2. Functionally, catalyzes the reversible reaction in which hydroxymethyl group from 5,10-methylenetetrahydrofolate is transferred onto alpha-ketoisovalerate to form ketopantoate. This chain is 3-methyl-2-oxobutanoate hydroxymethyltransferase, found in Clostridium beijerinckii (strain ATCC 51743 / NCIMB 8052) (Clostridium acetobutylicum).